A 227-amino-acid chain; its full sequence is Ribonuclease HII (227 aa).

The region spanning 16 to 205 is the RNase H type-2 domain; that stretch reads SLLAGVDEVG…VKMALDAVGV (190 aa). Residues Asp22, Glu23, and Asp114 each coordinate a divalent metal cation.

Belongs to the RNase HII family. The cofactor is Mn(2+). It depends on Mg(2+) as a cofactor.

The protein localises to the cytoplasm. It carries out the reaction Endonucleolytic cleavage to 5'-phosphomonoester.. Its function is as follows. Endonuclease that specifically degrades the RNA of RNA-DNA hybrids. This chain is Ribonuclease HII, found in Marinobacter nauticus (strain ATCC 700491 / DSM 11845 / VT8) (Marinobacter aquaeolei).